The primary structure comprises 303 residues: MTYSPGNPGYPQAQPAGSYGGVTPSFAHADEGASKLPMYLNIAVAVLGLAAYFASFGPMFTLSTELGGGDGAVSGDTGLPVGVALLAALLAGVALVPKAKSHVTVVAVLGVLGVFLMVSATFNKPSAYSTGWALWVVLAFIVFQAVAAVLALLVETGAITAPAPRPKFDPYGQYGRYGQYGQYGVQPGGYYGQQGAQQAAGLQSPGPQQSPQPPGYGSQYGGYSSSPSQSGSGYTAQPPAQPPAQSGSQQSHQGPSTPPTGFPSFSPPPPVSAGTGSQAGSAPVNYSNPSGGEQSSSPGGAPV.

4 helical membrane passes run 42 to 62, 77 to 97, 102 to 122, and 134 to 154; these read IAVA…MFTL, TGLP…ALVP, HVTV…SATF, and LWVV…ALLV. Low complexity-rich tracts occupy residues 194 to 207 and 215 to 255; these read QGAQ…SPGP and GYGS…HQGP. Positions 194–303 are disordered; that stretch reads QGAQQAAGLQ…QSSSPGGAPV (110 aa). Over residues 256 to 271 the composition is skewed to pro residues; it reads STPPTGFPSFSPPPPV. Residues 274-286 show a composition bias toward polar residues; it reads GTGSQAGSAPVNY. Over residues 287-303 the composition is skewed to low complexity; sequence SNPSGGEQSSSPGGAPV.

The protein to M.paratuberculosis 34 kDa antigenic protein.

The protein resides in the cell membrane. The protein is 34 kDa antigenic protein homolog of Mycobacterium bovis (strain ATCC BAA-935 / AF2122/97).